We begin with the raw amino-acid sequence, 365 residues long: UDP-N-acetylglucosamine--N-acetylmuramyl-(pentapeptide) pyrophosphoryl-undecaprenol N-acetylglucosamine transferase (365 aa).

UDP-N-acetyl-alpha-D-glucosamine contacts are provided by residues Thr-17–Gly-19, Asn-129, Arg-167, Ser-194, Ile-250, Ala-269–Glu-274, and Gln-295.

It belongs to the glycosyltransferase 28 family. MurG subfamily.

The protein localises to the cell inner membrane. It carries out the reaction di-trans,octa-cis-undecaprenyl diphospho-N-acetyl-alpha-D-muramoyl-L-alanyl-D-glutamyl-meso-2,6-diaminopimeloyl-D-alanyl-D-alanine + UDP-N-acetyl-alpha-D-glucosamine = di-trans,octa-cis-undecaprenyl diphospho-[N-acetyl-alpha-D-glucosaminyl-(1-&gt;4)]-N-acetyl-alpha-D-muramoyl-L-alanyl-D-glutamyl-meso-2,6-diaminopimeloyl-D-alanyl-D-alanine + UDP + H(+). The protein operates within cell wall biogenesis; peptidoglycan biosynthesis. Cell wall formation. Catalyzes the transfer of a GlcNAc subunit on undecaprenyl-pyrophosphoryl-MurNAc-pentapeptide (lipid intermediate I) to form undecaprenyl-pyrophosphoryl-MurNAc-(pentapeptide)GlcNAc (lipid intermediate II). The polypeptide is UDP-N-acetylglucosamine--N-acetylmuramyl-(pentapeptide) pyrophosphoryl-undecaprenol N-acetylglucosamine transferase (Shewanella violacea (strain JCM 10179 / CIP 106290 / LMG 19151 / DSS12)).